The chain runs to 134 residues: MISGSATASHGRVLLPSQRERRPVSTGSNILRFRETVPRQFSLMMVTKATAKYMGTKMREEKLSEMIEEKVKEATEVCEAEEMSEECRVAWDEVEEVSQARADLRIKLKLLNQDPLESFCQENPETDECRIYED.

Residues 1–21 (MISGSATASHGRVLLPSQRER) are disordered. The transit peptide at 1–42 (MISGSATASHGRVLLPSQRERRPVSTGSNILRFRETVPRQFS) directs the protein to the chloroplast. 2 disulfides stabilise this stretch: C78-C87 and C120-C129.

It belongs to the CP12 family. As to quaternary structure, monomer. Component of a complex that contains two dimers of PRK, two tetramers of GAPDH and CP12. CP12 associates with GAPDH, causing its conformation to change. This GAPDH/CP12 complex binds PRK to form a half-complex (one unit). This unit probably dimerizes due partially to interactions between the enzymes of each unit. In terms of processing, contains two disulfide bonds; only the oxidized protein, with two disulfide bonds, is active in complex formation. The C-terminal disulfide is involved in the interaction with GAPDH and the N-terminal disulfide mediates the binding of PRK with this binary complex. As to expression, mostly expressed, at low levels, in stems and, to a lesser extent, in leaves and roots.

It localises to the plastid. The protein localises to the chloroplast. In terms of biological role, acts as a linker essential in the assembly of a core complex of PRK/GAPDH. Coordinates the reversible inactivation of chloroplast enzymes GAPDH and PRK during darkness in photosynthetic tissues. The chain is Calvin cycle protein CP12-3, chloroplastic (CP12-3) from Arabidopsis thaliana (Mouse-ear cress).